Here is a 246-residue protein sequence, read N- to C-terminus: Ubiquinone biosynthesis O-methyltransferase (246 aa).

Residues R40, G70, D91, and M135 each contribute to the S-adenosyl-L-methionine site.

It belongs to the methyltransferase superfamily. UbiG/COQ3 family.

It carries out the reaction a 3-demethylubiquinol + S-adenosyl-L-methionine = a ubiquinol + S-adenosyl-L-homocysteine + H(+). The catalysed reaction is a 3-(all-trans-polyprenyl)benzene-1,2-diol + S-adenosyl-L-methionine = a 2-methoxy-6-(all-trans-polyprenyl)phenol + S-adenosyl-L-homocysteine + H(+). It participates in cofactor biosynthesis; ubiquinone biosynthesis. Functionally, O-methyltransferase that catalyzes the 2 O-methylation steps in the ubiquinone biosynthetic pathway. This chain is Ubiquinone biosynthesis O-methyltransferase, found in Colwellia psychrerythraea (strain 34H / ATCC BAA-681) (Vibrio psychroerythus).